The chain runs to 511 residues: Glucans biosynthesis protein G (511 aa).

The first 22 residues, 1–22, serve as a signal peptide directing secretion; it reads MMKMRWLSAAVMLTLYTSSSWA.

It belongs to the OpgD/OpgG family.

Its subcellular location is the periplasm. Its pathway is glycan metabolism; osmoregulated periplasmic glucan (OPG) biosynthesis. In terms of biological role, involved in the biosynthesis of osmoregulated periplasmic glucans (OPGs). This chain is Glucans biosynthesis protein G, found in Shigella boydii serotype 4 (strain Sb227).